A 201-amino-acid polypeptide reads, in one-letter code: Recombination protein RecR (201 aa).

Residues 60–75 form a C4-type zinc finger; the sequence is CSECGNMDVSDPCTVC. The Toprim domain maps to 83-178; sequence AAICVVETVG…SITSLARGVP (96 aa).

The protein belongs to the RecR family.

Functionally, may play a role in DNA repair. It seems to be involved in an RecBC-independent recombinational process of DNA repair. It may act with RecF and RecO. The protein is Recombination protein RecR of Maricaulis maris (strain MCS10) (Caulobacter maris).